Here is a 230-residue protein sequence, read N- to C-terminus: 6-carboxyhexanoate--CoA ligase (230 aa).

It belongs to the BioW family. Homodimer. It depends on Mg(2+) as a cofactor.

It carries out the reaction heptanedioate + ATP + CoA = 6-carboxyhexanoyl-CoA + AMP + diphosphate. It functions in the pathway metabolic intermediate metabolism; pimeloyl-CoA biosynthesis; pimeloyl-CoA from pimelate: step 1/1. Its function is as follows. Catalyzes the transformation of pimelate into pimeloyl-CoA with concomitant hydrolysis of ATP to AMP. The chain is 6-carboxyhexanoate--CoA ligase from Staphylococcus aureus (strain MSSA476).